The sequence spans 2145 residues: Mediator of RNA polymerase II transcription subunit 12-like protein (2145 aa).

The disordered stretch occupies residues 1-30 (MAAFGLLSYEQRPLKRPRLGPPDVYPQDPK). Thr-462 carries the phosphothreonine modification. Over residues 1436-1455 (ELEKGQHLGSSSKKERDRQK) the composition is skewed to basic and acidic residues. Disordered stretches follow at residues 1436 to 1460 (ELEKGQHLGSSSKKERDRQKQKSMS), 1721 to 1802 (RSYY…ISSQ), and 2029 to 2145 (DAVL…PSHF). Positions 1768 to 1777 (TKGRKRKTKS) are enriched in basic residues. A compositionally biased stretch (low complexity) spans 2052-2069 (RQPQVRQQQRLLQMQQPQ). The span at 2070–2079 (QPQPQQPPQP) shows a compositional bias: pro residues. Positions 2089 to 2099 (TLGLQAMQPQQ) are enriched in polar residues. Residues 2104–2124 (RQGLQQTQQQQQTAALVRQLQ) are compositionally biased toward low complexity. The segment covering 2125 to 2136 (KQLSSNQPQQGV) has biased composition (polar residues).

Belongs to the Mediator complex subunit 12 family. May be a component of the Mediator complex, which is known to be composed of MED1, MED4, MED6, MED7, MED8, MED9, MED10, MED11, MED12, MED13, MED13L, MED14, MED15, MED16, MED17, MED18, MED19, MED20, MED21, MED22, MED23, MED24, MED25, MED26, MED27, MED29, MED30, MED31, CCNC, CDK8 and CDC2L6/CDK11. The MED12, MED13, CCNC and CDK8 subunits form a distinct module termed the CDK8 module. Mediator containing the CDK8 module is less active than Mediator lacking this module in supporting transcriptional activation. Individual preparations of the Mediator complex lacking one or more distinct subunits have been variously termed ARC, CRSP, DRIP, PC2, SMCC and TRAP.

Its subcellular location is the nucleus. In terms of biological role, may be a component of the Mediator complex, a coactivator involved in the regulated transcription of nearly all RNA polymerase II-dependent genes. Mediator functions as a bridge to convey information from gene-specific regulatory proteins to the basal RNA polymerase II transcription machinery. Mediator is recruited to promoters by direct interactions with regulatory proteins and serves as a scaffold for the assembly of a functional preinitiation complex with RNA polymerase II and the general transcription factors. The sequence is that of Mediator of RNA polymerase II transcription subunit 12-like protein (MED12L) from Homo sapiens (Human).